A 241-amino-acid polypeptide reads, in one-letter code: ATP synthase subunit a (241 aa).

5 helical membrane-spanning segments follow: residues 23–43, 83–103, 113–133, 188–208, and 209–229; these read VSFTNSSLLMLLTVGLAAAFF, YFPYILTLFVFVFLGNMLGML, IAVTAALAVGIFIAVTIIGFA, VLAGFVIMLGVVGGVVPFAVV, and LGVTVLEFFIAALQAYVFTIL.

The protein belongs to the ATPase A chain family. As to quaternary structure, F-type ATPases have 2 components, CF(1) - the catalytic core - and CF(0) - the membrane proton channel. CF(1) has five subunits: alpha(3), beta(3), gamma(1), delta(1), epsilon(1). CF(0) has four main subunits: a, b, b' and c.

It localises to the cell inner membrane. Its function is as follows. Key component of the proton channel; it plays a direct role in the translocation of protons across the membrane. This Rhodospirillum rubrum (strain ATCC 11170 / ATH 1.1.1 / DSM 467 / LMG 4362 / NCIMB 8255 / S1) protein is ATP synthase subunit a.